A 387-amino-acid polypeptide reads, in one-letter code: Eukaryotic translation initiation factor 3 subunit M (387 aa).

Residues 181–340 (LSSKVMIELL…RKVHISSTMH (160 aa)) enclose the PCI domain.

The protein belongs to the eIF-3 subunit M family. As to quaternary structure, component of the eukaryotic translation initiation factor 3 (eIF-3) complex. The eIF-3 complex interacts with pix.

It is found in the cytoplasm. The protein localises to the golgi apparatus. Functionally, component of the eukaryotic translation initiation factor 3 (eIF-3) complex, which is involved in protein synthesis of a specialized repertoire of mRNAs and, together with other initiation factors, stimulates binding of mRNA and methionyl-tRNAi to the 40S ribosome. The eIF-3 complex specifically targets and initiates translation of a subset of mRNAs involved in cell proliferation. The protein is Eukaryotic translation initiation factor 3 subunit M of Drosophila grimshawi (Hawaiian fruit fly).